A 331-amino-acid polypeptide reads, in one-letter code: MVSYKEAGVNIEEGYKSVDLIKKHASKTFTKGVLNNLGSFAGMFELPKYKNPVLVSGTDGVGTKLDIAFRMKKYNTVGIDCVAMCVNDILCHGAKPLFFLDYIACGKLEAEVAAQLVEGVSNGCIQSECALIGGETAEMPGFYRDGEYDIAGFAVGIAEKDEIIDGSKIEDGDILIGIASSGPHSNGYSLIRKLVEDLHKDFAGDKIGNTLLAPTKIYVKPVMKLLEKYNIKGMAHVTGGGFYENIPRMFKDDFTAVINKKSYPIPNIFNHLMSLGVEENHMYNTFNMGIGFVLCVNEKDGENIIKDLIEMGEKGYKIGYVKKGDKSVELI.

Belongs to the AIR synthase family.

It localises to the cytoplasm. The catalysed reaction is 2-formamido-N(1)-(5-O-phospho-beta-D-ribosyl)acetamidine + ATP = 5-amino-1-(5-phospho-beta-D-ribosyl)imidazole + ADP + phosphate + H(+). It participates in purine metabolism; IMP biosynthesis via de novo pathway; 5-amino-1-(5-phospho-D-ribosyl)imidazole from N(2)-formyl-N(1)-(5-phospho-D-ribosyl)glycinamide: step 2/2. The chain is Phosphoribosylformylglycinamidine cyclo-ligase from Clostridium botulinum (strain Loch Maree / Type A3).